A 464-amino-acid polypeptide reads, in one-letter code: tRNA modification GTPase MnmE (464 aa).

(6S)-5-formyl-5,6,7,8-tetrahydrofolate is bound by residues Arg-26, Glu-92, and Arg-131. Positions 227-385 constitute a TrmE-type G domain; sequence GIKVAILGRV…LISALKDYVS (159 aa). Residue Asn-237 participates in K(+) binding. GTP contacts are provided by residues 237–242, 256–262, and 281–284; these read NAGKSS, SNIAGTT, and DTAG. Residue Ser-241 coordinates Mg(2+). Residues Ser-256, Ile-258, and Thr-261 each contribute to the K(+) site. Thr-262 contributes to the Mg(2+) binding site. Lys-464 is a (6S)-5-formyl-5,6,7,8-tetrahydrofolate binding site.

The protein belongs to the TRAFAC class TrmE-Era-EngA-EngB-Septin-like GTPase superfamily. TrmE GTPase family. As to quaternary structure, homodimer. Heterotetramer of two MnmE and two MnmG subunits. K(+) is required as a cofactor.

The protein localises to the cytoplasm. Exhibits a very high intrinsic GTPase hydrolysis rate. Involved in the addition of a carboxymethylaminomethyl (cmnm) group at the wobble position (U34) of certain tRNAs, forming tRNA-cmnm(5)s(2)U34. The chain is tRNA modification GTPase MnmE from Brachyspira hyodysenteriae (strain ATCC 49526 / WA1).